Reading from the N-terminus, the 170-residue chain is 2S seed storage protein 2 (170 aa).

Positions 1–21 (MANKLFLVCATFALCFLLTNA) are cleaved as a signal peptide. 2 propeptides span residues 22 to 37 (SIYR…DASN) and 73 to 88 (GPSL…DIEN).

It belongs to the 2S seed storage albumins family. In terms of assembly, the mature protein consists of a small and a large chain linked by disulfide bonds.

Its function is as follows. This is a 2S seed storage protein. The protein is 2S seed storage protein 2 (AT2S2) of Arabidopsis thaliana (Mouse-ear cress).